The sequence spans 213 residues: Heavy metal-binding protein HIP (213 aa).

The region spanning 80-213 (FKSHHVAFSA…MSTFTGFMLH (134 aa)) is the C1q domain.

In terms of tissue distribution, pallium, gill and liver.

The protein resides in the secreted. Functionally, binds heavy metals. May function as a carrier of divalent cations in plasma. This Mytilus edulis (Blue mussel) protein is Heavy metal-binding protein HIP.